We begin with the raw amino-acid sequence, 119 residues long: Large ribosomal subunit protein bL20 (119 aa).

The protein belongs to the bacterial ribosomal protein bL20 family.

Functionally, binds directly to 23S ribosomal RNA and is necessary for the in vitro assembly process of the 50S ribosomal subunit. It is not involved in the protein synthesizing functions of that subunit. The chain is Large ribosomal subunit protein bL20 from Legionella pneumophila (strain Paris).